The chain runs to 150 residues: MPAPADIQAATLNKFLAAWREGSAPDTMALWSDDFKQRLLPLSLGESSFRSRDQAALFYPGLVENLRNWELHIKEIVHDSARGTAAVYATSQADTPFSGEKWTNEYAIFLSFSEDGTKVCRLEEMMDSAFYQSFVPKFQRYLMGLGGLKK.

It belongs to the avfA family.

The protein operates within secondary metabolite biosynthesis. In terms of biological role, monooxygenase; part of the gene cluster that mediates the biosynthesis of the tetrahydroxanthone dimer neosartorin, which exhibits antibacterial activity. The two different monomeric units appear to be synthesized by the same set of enzymes, among which the Baeyer-Villiger monooxygenase nsrF is the key enzyme for the divergence of the biosynthetic routes. The pathway begins with the synthesis of atrochrysone thioester by the polyketide synthase nsrB. The atrochrysone carboxyl ACP thioesterase nsrC then breaks the thioester bond and releases the atrochrysone carboxylic acid from AacuL. Atrochrysone carboxylic acid is decarboxylated by the decarboxylase nsrE, and oxidized by the anthrone oxygenase nsrD to yield emodin. Emodin is then reduced to emodin hydroquinone by the oxidoreductase nsrR. A-ring reduction by the short chain dehydrogenase nsrJ, dehydration by the scytalone dehydratase-like protein nsrI and probable spontaneous re-oxidation, results in overall deoxygenation to chrysophanol. The Baeyer-Villiger monooxygenase nsrF accepts chrysophanol as a substrate to insert one oxygen atom at two different positions to yield the precursors of both monomric units. NsrF is promiscuous/flexible in interacting with the 2 (non methylated and methylated) aromatic rings of chrysophanol, thus diverging the biosynthetic pathway at this point. After the hydrolysis of the lactones, methylesterification by the methyltransferase nsrG yields respectively moniliphenone and 2,2',6'-trihydroxy-4-methyl-6-methoxya-cyldiphenylmethanone. The next steps are the hydroxylation by the FAD-dependent monooxygenase nsrK, followed by isomerization by the monooxygenase nsrQ. The short chain dehydrogenase/reductase nsrO then catalyzes the C-5 ketoreduction to give the xanthone skeleton of blennolide C and 5-acetylblennolide A. The acetyltransferase nsrL has a strict substrate specificity and uses only blennolide A but not blennolide C to yield 5-acetylblennolide A as the single-acetylated product. In the final step of the biosynthesis, the heterodimerization of the 2 xanthones, blennolide C and 5-acetylblennolide A, is catalyzed by the cytochrome P450 monooxygenase nsrP. NsrP can utilize at least three different xanthones as its substrates to perform the dimerization reaction. The protein is Monooxygenase nsrS of Aspergillus novofumigatus (strain IBT 16806).